Here is a 488-residue protein sequence, read N- to C-terminus: Stromelysin-3 (488 aa).

The signal sequence occupies residues 1-31; sequence MAPAAWLRSAAARALLPPMLLLLLQPPPLLA. Positions 32–97 are cleaved as a propeptide — activation peptide; the sequence is RALPPDAHHL…GLSARNRQKR (66 aa). The segment at 41–93 is disordered; that stretch reads LHAERRGPQPWHAALPSSPAPAPATQEAPRPASSLRPPRCGVPDPSDGLSARN. The segment covering 50–79 has biased composition (low complexity); it reads PWHAALPSSPAPAPATQEAPRPASSLRPPR. The Cysteine switch signature appears at 78-85; sequence PRCGVPDP. Zn(2+)-binding residues include cysteine 80 and aspartate 166. 4 residues coordinate Ca(2+): aspartate 171, glycine 172, glycine 174, and isoleucine 176. Zn(2+) is bound by residues histidine 179, histidine 192, and histidine 215. Residue glutamate 216 is part of the active site. Residues histidine 219 and histidine 225 each contribute to the Zn(2+) site. Hemopexin repeat units lie at residues 291–339, 340–382, 384–432, and 433–480; these read PDAC…WQGL, PSPV…ELGL, RFPV…WRGV, and PSEI…FFGC. The cysteines at positions 294 and 480 are disulfide-linked.

Belongs to the peptidase M10A family. It depends on Ca(2+) as a cofactor. Zn(2+) serves as cofactor. Post-translationally, the precursor is cleaved by a furin endopeptidase. In terms of tissue distribution, specifically expressed in stromal cells of breast carcinomas.

It localises to the secreted. Its subcellular location is the extracellular space. It is found in the extracellular matrix. May play an important role in the progression of epithelial malignancies. The sequence is that of Stromelysin-3 (MMP11) from Homo sapiens (Human).